The following is a 101-amino-acid chain: NAD(P)H-quinone oxidoreductase subunit 4L, chloroplastic (101 aa).

3 helical membrane passes run 2 to 22, 32 to 52, and 61 to 81; these read MLEH…YGLI, MCLE…SDLF, and VFSI…PAIV.

Belongs to the complex I subunit 4L family. In terms of assembly, NDH is composed of at least 16 different subunits, 5 of which are encoded in the nucleus.

The protein resides in the plastid. It is found in the chloroplast thylakoid membrane. It catalyses the reaction a plastoquinone + NADH + (n+1) H(+)(in) = a plastoquinol + NAD(+) + n H(+)(out). The enzyme catalyses a plastoquinone + NADPH + (n+1) H(+)(in) = a plastoquinol + NADP(+) + n H(+)(out). NDH shuttles electrons from NAD(P)H:plastoquinone, via FMN and iron-sulfur (Fe-S) centers, to quinones in the photosynthetic chain and possibly in a chloroplast respiratory chain. The immediate electron acceptor for the enzyme in this species is believed to be plastoquinone. Couples the redox reaction to proton translocation, and thus conserves the redox energy in a proton gradient. This chain is NAD(P)H-quinone oxidoreductase subunit 4L, chloroplastic, found in Nuphar advena (Common spatterdock).